The primary structure comprises 312 residues: Zinc transporter ZitB (312 aa).

The next 5 membrane-spanning stretches (helical) occupy residues 21–41 (LLFAFIVTAGFMLLEVVGGIL), 48–68 (LADAGHMLTDAAALLFALLVV), 90–110 (AAFVNAIALVVITLLIVWEAI), 123–143 (LMMVIAVAGLLANLFAFWILH), and 164–184 (LLGSVGAIVAALIIIWTGWTP).

The protein belongs to the cation diffusion facilitator (CDF) transporter (TC 2.A.4) family. SLC30A subfamily.

Its subcellular location is the cell inner membrane. Involved in zinc efflux across the cytoplasmic membrane, thus reducing zinc accumulation in the cytoplasm and rendering bacteria more resistant to zinc. It may contribute to zinc homeostasis at low concentrations of zinc. The chain is Zinc transporter ZitB from Salmonella typhi.